The sequence spans 1201 residues: MRRRARSIRFSSDDNEDNEEDDDYYSNAHSEKSEDHSNHIKVSHFDPSSYKQKLVSVRETQRNRKFSSLQKHLNTETPSFSVSIENPSKPSAAFNDASLGKKSTEHQIDGIRNGSSNLQMEGNDKELDTDNNEDESTTFKDEEDDLISPKSYLTSSKTFSYPKAPTESTNGDYLDEDYVDGQSDPESSNASDSDFADSPDDLTKVRSPIPSRRGRRKRKMRGPILPVKKNLRVKKAMSPLRAERNSPDFRRKLRSRDNRPNYHLFDYYNEIASSPNPSTTKITYNPPKLPMKDFATLPIGYQSTCDSDETSELSSTSSEQTSDVEGLNAYNNLGASSDIENAPSSQLHFGHIDEKTIRSTDPFANRENLDFNSIGGLEDIILQLKEMVMLPLLYPEVFLHLHITPPRGVLFHGPPGTGKTLMARVLAANCSTKNQKISFFLRKGSDCLSKWVGEAERQLRLLFEEARRVQPSIIFFDEIDGLAPIRSSKQEQTHSSIVSTLLALMDGLDTRGQVVVIGATNRPNDLDPALRRPGRFDREFYFPLPNKQARMKILEINSLHFSPKIPESYLLHLAESTSGYGGADLKALCTEAALNAVRRTFPQIYTSSDKFLIDLNEISVSICDFVVASEKIAVSTRRSDVKPNIPITDSHKILFKKSIEVITSKIRRLLKLDVYLPTVESLQKLPAEELMRQKEINSLKTTMSFRPRLLITDIYGYGCTYLSKVLFSMLDGIHVQSLDISELLMDTTTSPRSLLTKIFSEARKNAPSIIFINNVEKWPSLFSHSFLSMFLLLLDSISPLEPVMLLGFANTNQEKLSSTVRSWFPSHRSEYHDLSFPDYSSRYSFFHYLLKRISFLPIHQKSAEAASVDILPKVLPVSKTSDLTDKVNRRQRKNDKKIKNKIQVKLSSILEMLRSRYKKFKKPIIDLNDIYIDESNERVVKGKSKDNFEYFLSGNTVTRKKDNACFKMMNFEEIERRLWSGRYCTPKEFLRDIKMIKQDAILSGDVNLKHKAKEMFAHAELNVDELIDAKLLYDCCQVSKREKAYKQLKQKKLNNAKDAHEMQESKNEETFVRNDVAQEDNFIELSSNEVRNVSNDEHKHTLFHGQSLTHNNLIAVTPPSRTGVEHKEENKKYDNVNIQKTLAKCAEEFAEHTNFNKVELLDFVYSKLSSTIWENREEHDLLKIVRDVRQTFFRSLEDMGV.

2 disordered regions span residues 1–223 (MRRR…MRGP) and 305–324 (CDSDETSELSSTSSEQTSDV). A compositionally biased stretch (acidic residues) spans 13 to 24 (DDNEDNEEDDDY). A compositionally biased stretch (basic and acidic residues) spans 29-38 (HSEKSEDHSN). The segment covering 66 to 89 (FSSLQKHLNTETPSFSVSIENPSK) has biased composition (polar residues). Over residues 129-146 (TDNNEDESTTFKDEEDDL) the composition is skewed to acidic residues. Residues 212–221 (RRGRRKRKMR) are compositionally biased toward basic residues. The span at 312–323 (ELSSTSSEQTSD) shows a compositional bias: low complexity. Residue 413 to 420 (GPPGTGKT) participates in ATP binding. The region spanning 897-1026 (KIKNKIQVKL…AHAELNVDEL (130 aa)) is the Bromo domain.

Belongs to the AAA ATPase family.

It is found in the nucleus. The catalysed reaction is ATP + H2O = ADP + phosphate + H(+). Functionally, probable ATPase which may play a role in nucleosome organization. The protein is ATPase with bromodomain protein abo2 of Schizosaccharomyces pombe (strain 972 / ATCC 24843) (Fission yeast).